The sequence spans 514 residues: Peptide chain release factor 3 (514 aa).

Residues 8-268 (KKRRTFAIIS…SFLAFAPEPH (261 aa)) enclose the tr-type G domain. GTP contacts are provided by residues 17–24 (SHPDAGKT), 85–89 (DTPGH), and 139–142 (NKLD).

It belongs to the TRAFAC class translation factor GTPase superfamily. Classic translation factor GTPase family. PrfC subfamily.

It is found in the cytoplasm. In terms of biological role, increases the formation of ribosomal termination complexes and stimulates activities of RF-1 and RF-2. It binds guanine nucleotides and has strong preference for UGA stop codons. It may interact directly with the ribosome. The stimulation of RF-1 and RF-2 is significantly reduced by GTP and GDP, but not by GMP. This Streptococcus mutans serotype c (strain ATCC 700610 / UA159) protein is Peptide chain release factor 3.